The sequence spans 336 residues: Electron transfer flavoprotein subunit alpha (336 aa).

275 to 303 (LYIACGISGAIQHLAGMQDSDYIIAINKD) is a binding site for FAD.

The protein belongs to the ETF alpha-subunit/FixB family. In terms of assembly, heterodimer of an alpha and a beta subunit. FAD is required as a cofactor.

Its function is as follows. The electron transfer flavoprotein serves as a specific electron acceptor for other dehydrogenases. It transfers the electrons to the main respiratory chain via ETF-ubiquinone oxidoreductase (ETF dehydrogenase). This Clostridium acetobutylicum (strain ATCC 824 / DSM 792 / JCM 1419 / IAM 19013 / LMG 5710 / NBRC 13948 / NRRL B-527 / VKM B-1787 / 2291 / W) protein is Electron transfer flavoprotein subunit alpha (etfA).